Consider the following 370-residue polypeptide: Phospho-2-dehydro-3-deoxyheptonate aldolase, tyrosine-inhibited (370 aa).

Position 2 is an N-acetylserine (serine 2).

The protein belongs to the class-I DAHP synthase family.

It catalyses the reaction D-erythrose 4-phosphate + phosphoenolpyruvate + H2O = 7-phospho-2-dehydro-3-deoxy-D-arabino-heptonate + phosphate. The protein operates within metabolic intermediate biosynthesis; chorismate biosynthesis; chorismate from D-erythrose 4-phosphate and phosphoenolpyruvate: step 1/7. With respect to regulation, inhibited by tyrosine. In terms of biological role, stereospecific condensation of phosphoenolpyruvate (PEP) and D-erythrose-4-phosphate (E4P) giving rise to 3-deoxy-D-arabino-heptulosonate-7-phosphate (DAHP). The protein is Phospho-2-dehydro-3-deoxyheptonate aldolase, tyrosine-inhibited (ARO4) of Saccharomyces cerevisiae (strain ATCC 204508 / S288c) (Baker's yeast).